A 603-amino-acid chain; its full sequence is Glutamyl-tRNA(Gln) amidotransferase subunit B, mitochondrial (603 aa).

Disordered stretches follow at residues 38–61 (RGRDWSSTSRRAIDTQTSGASNGA) and 72–91 (EQAREGRAATRKGEVSPPEH). Positions 42-58 (WSSTSRRAIDTQTSGAS) are enriched in polar residues.

The protein belongs to the GatB/GatE family. GatB subfamily. Subunit of the heterotrimeric GatCAB amidotransferase (AdT) complex, composed of A, B and C subunits.

The protein resides in the mitochondrion. The enzyme catalyses L-glutamyl-tRNA(Gln) + L-glutamine + ATP + H2O = L-glutaminyl-tRNA(Gln) + L-glutamate + ADP + phosphate + H(+). Allows the formation of correctly charged Gln-tRNA(Gln) through the transamidation of misacylated Glu-tRNA(Gln) in the mitochondria. The reaction takes place in the presence of glutamine and ATP through an activated gamma-phospho-Glu-tRNA(Gln). In Paracoccidioides brasiliensis (strain Pb18), this protein is Glutamyl-tRNA(Gln) amidotransferase subunit B, mitochondrial.